A 91-amino-acid chain; its full sequence is uncharacterized protein (91 aa).

A signal peptide spans 1–21 (MKIISKMLVGALALAVTNVYA).

This sequence belongs to the BhsA/McbA family.

It localises to the periplasm. This is an uncharacterized protein from Escherichia coli (strain K12).